Reading from the N-terminus, the 195-residue chain is MDRVLSRADKERLLELLKLPRQLWGDFGRMQQAYKQQSLLLHPDKGGSHALMQELNSLWGTFKTEVYNLRMNLGGTGFQVRRLHADGWNLSTKDTFGDRYYQRFCRMPLTCLVNVKYSSCSCILCLLRKQHRELKDKCDARCLVLGECFCLECYMQWFGTPTRDVLNLYADFIASMPIDWLDLDVHSVYNPRLSP.

An N-acetylmethionine; by host modification is found at methionine 1. Residues arginine 12–glycine 75 form the J domain.

As to quaternary structure, interacts with host PPP2R1A; the interaction inhibits PP2A activity.

The protein localises to the host cytoplasm. It is found in the host nucleus. Its function is as follows. Promotes efficient viral genome replication by accelerating both G1 and S phase progression of the cell cycle. Inhibits host PP2A by binding to the A subunit, thereby displacing lower affinity regulatory B subunit. Inactivation of PP2A in turn results in the transactivation of cyclin A and cyclin D1 promoters. Late during the infection cycle, ST may induce dephosphorylation of host MTOR, leading to the inhibition of cap-dependent translation. May establish and maintain high levels of viral genomes during persistent infection in cell culture. The protein is Small t antigen of Mus musculus (Mouse).